The primary structure comprises 160 residues: Putative 4-hydroxy-4-methyl-2-oxoglutarate aldolase (160 aa).

Substrate contacts are provided by residues 76–79 (GDMI) and Arg-98. An a divalent metal cation-binding site is contributed by Asp-99.

It belongs to the class II aldolase/RraA-like family. As to quaternary structure, homotrimer. A divalent metal cation serves as cofactor.

The enzyme catalyses 4-hydroxy-4-methyl-2-oxoglutarate = 2 pyruvate. It carries out the reaction oxaloacetate + H(+) = pyruvate + CO2. In terms of biological role, catalyzes the aldol cleavage of 4-hydroxy-4-methyl-2-oxoglutarate (HMG) into 2 molecules of pyruvate. Also contains a secondary oxaloacetate (OAA) decarboxylase activity due to the common pyruvate enolate transition state formed following C-C bond cleavage in the retro-aldol and decarboxylation reactions. The chain is Putative 4-hydroxy-4-methyl-2-oxoglutarate aldolase from Alcanivorax borkumensis (strain ATCC 700651 / DSM 11573 / NCIMB 13689 / SK2).